The following is a 1392-amino-acid chain: MEVLMAERVNLVFHNKVIDGTAIKRLISRLIDHFGMAYTSHILDQVKTLGFQQATATSISLGIDDLLTIPSKGWLVQDAEQQSLILEKHHHYGNVHAVEKLRQSIEVWYATSEYLRQEMNPNFRMTDPFNPVHIMSFSGARGNASQVHQLVGMRGLMSDPQGQMIDLPIQSNLREGLSLTEYIISCYGARKGVVDTAVRTSDAGYLTRRLVEVVQHIVVRRTDCGTIRGVSVSPRNGMMPERIFIQTLIGRVLADDIYMGPRCIAIRNQDIGIGLVNRFITFRTQPISIRTPFTCRSTSWICRLCYGRSPTHGDLVELGEAVGIIAGQSIGEPGTQLTLRTFHTGGVFTGGTAEHVRAPSNGKIKFNDDLVHPTRTRHGHPAFLCSIDLYVTIESEDILHNVTIPPKSFLLVQNNQYVESEQVIAEIRAGTYTFNLKERVRKHIYSESEGEMHWSTDVYHAPEFTYSNVHLLPKTSHLWILSGGSCRSSRVPFSLYKDQDQMNLRSTERERRYISSLSVNNDQMRYELCSSDFSGKIKEDRIPDYSELNRIISIVHCNLKYPTTFDENSDLLAKRRRNRFLIPLQSIQERKKELMPHSGISIELPINGILRRNSILAYFDDPRYRRKSSGIIKYGTLGVHSVVKKEDLIEYRGIKEFKQKCQMKLDPFFFIPEEVHIFPESSSIMVRNNSLIGVDTRIALNTRSRVGGLVRVERKKKRIELKIFSGDIHFPGETDKISRHSGILIPPGTGKTNFKESKKWKNWIYVQRITPTKKKYFVLVRPVVTYEVLDGINLATLFPPDLLQERDNMQLRVVNYIVYRNGKPIRGISDTSIQLVRTCLILNWDQDKKSSSIEEAHTSFVEVSTNGLIRDFLRIDLVKFPISYLRKRNDPSGSGLISDSDNVSDHTNSNPFYSKTKIQQLLSQNQGTIRTLLNKNKECPSLIILSSSNCFRMGPFNAGKYHNVIKESIKKDPIIKIRNSIGPLGTVLQFVNFYSFYYLITHNPILVTKYLQLENLKQTFQVINYYLMDENGRILNPDSCSNIVLNSFNLNWYFLHHNYYHNYFEERSTIISLGQFICENVCISKNGPHLKSGQVLIVQVDSVVIRSAKPYLATPGATVHGHYGEILYEGDTLVTFIYEKSRSGDITQGLPKVEQVLEVRSIDSISMNLEKRIEGWNEHIKKILGIPWGFLIGAELTIVQSRISLVNKIQKVYRSQGVQIHNRHIEIIVRQITSKVLVSEDGMSNVFLPGELIGLLRAARTGRALEESICYRAILLGITRASLNTQSFISEASFQETARVLAKAALRGRIDWLKGLKENVVIGGMIPVGTGFKGLVHRSRQHKNIPLKTKKKNFFEGEIGDILFHHRELFDSSISKKFHDTSEQSFRGFNDS.

Positions 224, 295, 302, and 305 each coordinate Zn(2+).

This sequence belongs to the RNA polymerase beta' chain family. RpoC2 subfamily. In plastids the minimal PEP RNA polymerase catalytic core is composed of four subunits: alpha, beta, beta', and beta''. When a (nuclear-encoded) sigma factor is associated with the core the holoenzyme is formed, which can initiate transcription. The cofactor is Zn(2+).

It localises to the plastid. It is found in the chloroplast. The catalysed reaction is RNA(n) + a ribonucleoside 5'-triphosphate = RNA(n+1) + diphosphate. Its function is as follows. DNA-dependent RNA polymerase catalyzes the transcription of DNA into RNA using the four ribonucleoside triphosphates as substrates. The chain is DNA-directed RNA polymerase subunit beta'' from Eucalyptus globulus subsp. globulus (Tasmanian blue gum).